We begin with the raw amino-acid sequence, 228 residues long: Small ribosomal subunit protein uS3 (228 aa).

Residues valine 39 to arginine 107 form the KH type-2 domain.

This sequence belongs to the universal ribosomal protein uS3 family. As to quaternary structure, part of the 30S ribosomal subunit. Forms a tight complex with proteins S10 and S14.

Its function is as follows. Binds the lower part of the 30S subunit head. Binds mRNA in the 70S ribosome, positioning it for translation. The sequence is that of Small ribosomal subunit protein uS3 from Ectopseudomonas mendocina (strain ymp) (Pseudomonas mendocina).